Reading from the N-terminus, the 1023-residue chain is Protein FAM13A (1023 aa).

One can recognise a Rho-GAP domain in the interval 43 to 231; it reads VSLQELERQG…KILENYNTLF (189 aa). The interval 269-290 is disordered; that stretch reads LERDMPKPPPKTKIPKSRSEGS. Position 345 is a phosphoserine (Ser345). Disordered regions lie at residues 381–437 and 459–562; these read VNNS…SGFN and CAGE…EVPQ. Over residues 384-405 the composition is skewed to low complexity; it reads SGGQSSEDSESGTLSASSATSA. Basic and acidic residues-rich tracts occupy residues 412–427 and 509–524; these read SKEQDEVRHGRDKGLI and SDERKGNEKDGGHTQH. The segment covering 536–549 has biased composition (polar residues); that stretch reads PSLSDTKQQRNQDA. 2 positions are modified to phosphoserine: Ser597 and Ser617. Disordered stretches follow at residues 628 to 663 and 726 to 759; these read QYLDDTEVPPSPPNSHSFMRRRSSSLGSYDDEQEDL and ISEEDLTPRMRQRSNTLPKSFGSQLEKEDEKKQE. Residues 666–730 adopt a coiled-coil conformation; sequence AQLTRRIQSL…ESKLKISEED (65 aa). The residue at position 727 (Ser727) is a Phosphoserine. Thr732 carries the post-translational modification Phosphothreonine. The span at 738–748 shows a compositional bias: polar residues; that stretch reads RSNTLPKSFGS. Basic and acidic residues predominate over residues 750-759; the sequence is LEKEDEKKQE. Residues 946 to 978 adopt a coiled-coil conformation; that stretch reads ASIPELLEHLQEMREEKKRIRKKLRDFEDNFFR.

It belongs to the FAM13 family. As to expression, isoform 1 is widely expressed, with highest expression in skeletal muscle, thymus, brain and lung. Isoform 3 is less abundant than isoform 1 and predominantly expressed in kidney, pancreas, liver, lung and thymus.

The polypeptide is Protein FAM13A (FAM13A) (Homo sapiens (Human)).